The following is a 665-amino-acid chain: Sodium-dependent phosphate transporter 1-B (665 aa).

The next 6 helical transmembrane spans lie at 26 to 46 (YMWL…SVGA), 67 to 87 (ACIL…AKVS), 107 to 127 (LMAG…AASF), 163 to 183 (IVAS…VLFY), 202 to 222 (ALPF…MFTG), and 235 to 255 (GVLL…WFAV). Disordered stretches follow at residues 294-345 (VPEE…APKT) and 423-442 (ESEF…AQER). The segment covering 296 to 306 (EESSVLSSSTP) has biased composition (low complexity). A compositionally biased stretch (basic and acidic residues) spans 329–338 (ADQKDCKESD). 4 helical membrane-spanning segments follow: residues 499–519 (VSML…FAHG), 548–568 (TPIW…WVWG), 588–608 (FSIE…GLPV), and 638–658 (IFMA…AIMA).

The protein belongs to the inorganic phosphate transporter (PiT) (TC 2.A.20) family.

Its subcellular location is the membrane. Its function is as follows. Sodium-phosphate symporter which plays a fundamental housekeeping role in phosphate transport. The protein is Sodium-dependent phosphate transporter 1-B (slc20a1b) of Danio rerio (Zebrafish).